A 377-amino-acid chain; its full sequence is Transcription factor EC (377 aa).

Residues 169–222 (QKKDNHNLIERRRRYNINYRIKELGTLIPKSNDPDMRWNKGTILKASVEYIKWL) enclose the bHLH domain. Residues 349-377 (DPLLSSTSPAASKESSRRSSFSTDDGDDL) form a disordered region. Residues 353 to 370 (SSTSPAASKESSRRSSFS) are compositionally biased toward low complexity.

This sequence belongs to the MiT/TFE family.

The protein resides in the nucleus. In terms of biological role, transcriptional regulator that acts as a repressor or an activator. Binds DNA. This is Transcription factor EC (TFEC) from Gallus gallus (Chicken).